Here is a 1908-residue protein sequence, read N- to C-terminus: MSRYQPRIILNHPEKVVPDDIMEQFFLTIKTGDIDKIRNFVAQNKNKFNIIEKSSKPGGPNKTPIHAVLELDDRIADQETKLTIIKYLDKMGAPMDLPDSDNVWPIHLAAADQDEDIIDYMLKNKVSIDRKDSSNNTPLHYAVYGKQVPCFDKVKVGSIVPPQDIDKLPLNKTLTDTKDYIVELLNNNPQIKNNLIHTVNTIMNIPSMYQATKTEKDLETDIVDIFTEIASNPSYPSQNYANSMSVQQNKLDQLINRMYILINDDLLRGLTNPLKISPNNTGWGPVTPSSSGQPSSIDRILEREHDYVFNELNNKYSSARNTVIDINLASTNKLSRETIPNIMRNINTNYIDRLIFCPDCSNSEYGEKITLTKMLYLLVWSNYKLNYIPDLVRRIMDNMKIMSTPIHSQIVNSNYTAFPLNSNLLVDDDSSLIGYIFSNLLRNKLNPQSQIDLALANVMDQVDPTINAITGGINSCITNQLVPLFTNSDDPNGAVNLFDGVLNSPINNLWSIPEFRSLREDINDLRPAYRDGKISWFQMLFNLIQEIQPNLVTGNTNDVTNNIFIRGRRTPRYILPLTPLPNSTNYGPPPGPPHGTLNNAYTYSEAFRVMDALVQYITSGQINATRYPRVFDQNINDWIPFIDNEFQSDALLQQYPELTFLYKILAVHTQRAIYSVIFNCISILLRNLPVSPEADIVRNYLELIDDAYMYYLLLPSEPNPAEFTQTGTDDTLADLKQHKWDPDNDLVNWFTKYIQRIPTEFIEQLYQLIIQNIDDFNYGNLENIRNHIESSMGDLSNFITPIINNSEFRNSIKKYFGTFNYPASYNGTRIASMQVIPRFNSLIDDIDFEYRFDDYLTLLRNGAITGLTFLTEVYGYFFVDTKKRLQLIDESLVDINAIVADIIANINNETYYYIPQVILPALVKQLITVITNIYAIKDVLSKFTPVKVEFDSLITNSIPEHNQIINLGNDFVSYVQDQLKIIYTNTIDIIKYHNNVIEFLNTHSASQLINATNTATGNNITTTRVFNRNLIPIQIFPSTLSDNPNFTEIETVLRSYSIPEITYYADATDNTDILIDIFDIGSTLNLYHGTISFDRTGIISNSPNVTDNLQINIENDGTVKDIPDPIAGQWLSFDVNHPRGTSYFNAFIAYITRNFQFDKLNGMPSSVFKFLPEYLSFMKQQIIEQVVQFIVDNKDTNAKKIYDELTNLGTQTSYQAIPDVKNYIIIGKLTDDILNKLFEFAIRQSVSSWIYNITSNDPRYRSIIDPLNQTISIINKKDYLRLSLNQINRETISDLLSTNSPYVDYGLAQVETNPNNLSYTNYQNLNKFIYYLYNINYSSDNFQDGNCYYINPTIVSKLIDSYTLEAKNSDGNTPLHLAISMTNPDIVEILLKHGANPFTFRNIRNESPYDLFNDIIRSHLKYDTGNTVSKSIENFYKPFNDLLVSRLLDDKFKNNIIKNITYGIPIELIMYNHMFHLYLENYRYDFTIEMRDSIRRIFQKYFNITDTVYPTDLFEINRDEDLSKILESEFPQNRVKTSVQLLNPKLRDYQKQLAELNNQIINLTKEKRSTINSQQISFINNLIANLEARKSIVQTNISDLEFKQPTSTVDSAMISSFKSSVNSIQNRIGDRSLNLIDFYRLAFGRIGYSQDLYLNIWRLYLEKDILNARSMIFPLLDQVINNHVSLVKENKMTRENKMTRENKQELAVIVDFYSTVKKYIESKKSLPNNLDDNPILQEEHDHIVYLINLILTPTIRNILISQIYQGLAESDLTNTLIADRNVAIRDILNSEYNGHSLDSFIKDILPNLSVKYFTTIYGNQDPNKFITSASDVFQPIIETVKLNRIIQVSDDSILIQNLRDYVIPFFINTYQNFIHHIELSIYAYEKYILNTYQLTKILQIMSNLQIPK.

ANK repeat units follow at residues 20–50 (DIMEQFFLTIKTGDIDKIRNFVAQNKNKFNI), 60–97 (PNKTPIHAVLELDDRIADQETKLTIIKYLDKMGAPMDL), 101–130 (DNVWPIHLAAADQDEDIIDYMLKNKVSIDR), 134–167 (SNNTPLHYAVYGKQVPCFDKVKVGSIVPPQDIDK), and 1370–1399 (DGNTPLHLAISMTNPDIVEILLKHGANPFT). Positions 1539–1603 (VQLLNPKLRD…QTNISDLEFK (65 aa)) form a coiled coil.

The protein localises to the virion. This Acanthamoeba polyphaga mimivirus (APMV) protein is Putative ankyrin repeat protein L484.